A 246-amino-acid chain; its full sequence is 1-(5-phosphoribosyl)-5-[(5-phosphoribosylamino)methylideneamino] imidazole-4-carboxamide isomerase (246 aa).

The active-site Proton acceptor is aspartate 8. Aspartate 131 (proton donor) is an active-site residue.

It belongs to the HisA/HisF family.

Its subcellular location is the cytoplasm. The catalysed reaction is 1-(5-phospho-beta-D-ribosyl)-5-[(5-phospho-beta-D-ribosylamino)methylideneamino]imidazole-4-carboxamide = 5-[(5-phospho-1-deoxy-D-ribulos-1-ylimino)methylamino]-1-(5-phospho-beta-D-ribosyl)imidazole-4-carboxamide. Its pathway is amino-acid biosynthesis; L-histidine biosynthesis; L-histidine from 5-phospho-alpha-D-ribose 1-diphosphate: step 4/9. This is 1-(5-phosphoribosyl)-5-[(5-phosphoribosylamino)methylideneamino] imidazole-4-carboxamide isomerase from Bordetella bronchiseptica (strain ATCC BAA-588 / NCTC 13252 / RB50) (Alcaligenes bronchisepticus).